The following is a 175-amino-acid chain: Pituitary adenylate cyclase-activating polypeptide (175 aa).

Residues M1 to C24 form the signal peptide. The propeptide occupies S25–D78. An important for receptor binding region spans residues V149–L157. L157 is subject to Leucine amide. Residue K168 is modified to Lysine amide. The propeptide occupies I172 to L175.

Belongs to the glucagon family.

The protein resides in the secreted. Its function is as follows. PACAP is a neuropeptide involved in diverse array of physiological processes through activating the PACAP subfamily of class B1 G protein-coupled receptors: VIP receptor 1 (VIPR1), VIP receptor 2 (VIPR2), and PACAP type I receptor (ADCYAP1R1). Exerts neuroprotective and general cytoprotective effects due to anti-apoptotic, anti-inflammatory, and antioxidant actions. Promotes neuron projection development through the RAPGEF2/Rap1/B-Raf/ERK pathway. In chromaffin cells, induces long-lasting increase of intracellular calcium concentrations and neuroendocrine secretion. Involved in the control of glucose homeostasis, induces insulin secretion by pancreatic beta cells. PACAP exists in two bioactive forms from proteolysis of the same precursor protein, PACAP27 and PACAP38, which differ by eleven amino acid residues in the C-terminus. The protein is Pituitary adenylate cyclase-activating polypeptide of Mus musculus (Mouse).